We begin with the raw amino-acid sequence, 389 residues long: tRNA-specific 2-thiouridylase MnmA (389 aa).

ATP-binding positions include 35–42 (GMSGGVDS) and M61. The interaction with target base in tRNA stretch occupies residues 121-123 (NPD). C126 (nucleophile) is an active-site residue. Cysteines 126 and 223 form a disulfide. An ATP-binding site is contributed by G151. Residues 173–175 (KDQ) form an interaction with tRNA region. C223 (cysteine persulfide intermediate) is an active-site residue. The interval 335-336 (RY) is interaction with tRNA.

It belongs to the MnmA/TRMU family.

Its subcellular location is the cytoplasm. It catalyses the reaction S-sulfanyl-L-cysteinyl-[protein] + uridine(34) in tRNA + AH2 + ATP = 2-thiouridine(34) in tRNA + L-cysteinyl-[protein] + A + AMP + diphosphate + H(+). Functionally, catalyzes the 2-thiolation of uridine at the wobble position (U34) of tRNA, leading to the formation of s(2)U34. The sequence is that of tRNA-specific 2-thiouridylase MnmA from Actinobacillus succinogenes (strain ATCC 55618 / DSM 22257 / CCUG 43843 / 130Z).